The chain runs to 454 residues: T-box protein VegT (454 aa).

Residues 57–230 (LWSQFHQEGT…HNPFAKGFRE (174 aa)) constitute a DNA-binding region (T-box). Residues 229–241 (REQERSHKRDDVL) show a composition bias toward basic and acidic residues. Disordered stretches follow at residues 229–274 (REQE…ATRV) and 295–358 (ANQG…VPDS). The span at 308–325 (GVNQEQQVPTSSLNFYNK) shows a compositional bias: polar residues.

As to quaternary structure, forms a repression complex on the promoters of the nodal/nr1 and siamois genes with the maternal factors tcf7l1/tcf3 and pouf5.1/oct-25. Interacts (via C-terminus) with tcf7l1/tcf3 (via N-terminus). Also interacts with the other POU-domain transcription factors pou5f1.2/oct-91 and pou5f1.3/oct-60.

It localises to the nucleus. Its function is as follows. Transcription factor required for both mesoderm and endoderm formation in the embryo; signaling determinants and concentration levels may determine which germ layer is formed. Acts together with beta-catenin to activate genes that are responsible for mesoderm induction including wnt-8, eomes t/bra, siamois, mix1 and sox17. Directly binds to promoter DNA. Patterns the mesoderm along the dorsoventral and posterior axis. Activates siamois gene transcription when alone or in combination with beta-catenin, but inhibits siamois transcription in combination with pou5f1.1/oct-25. The protein is T-box protein VegT of Xenopus borealis (Kenyan clawed frog).